Consider the following 1057-residue polypeptide: Carbamoyl phosphate synthase large chain (1057 aa).

The tract at residues M1 to E401 is carboxyphosphate synthetic domain. ATP-binding residues include R129, R169, G175, G176, K208, I210, E215, G241, I242, H243, Q284, and E298. The 195-residue stretch at R133–V327 folds into the ATP-grasp 1 domain. 3 residues coordinate Mg(2+): Q284, E298, and N300. 3 residues coordinate Mn(2+): Q284, E298, and N300. The segment at Y402–S546 is oligomerization domain. A carbamoyl phosphate synthetic domain region spans residues I547–G929. In terms of domain architecture, ATP-grasp 2 spans E671–I861. 10 residues coordinate ATP: R707, R746, L748, E752, G777, V778, H779, S780, Q820, and E832. Mg(2+) contacts are provided by Q820, E832, and N834. Mn(2+) is bound by residues Q820, E832, and N834. One can recognise an MGS-like domain in the interval V930 to M1057. Residues V930–M1057 form an allosteric domain region.

This sequence belongs to the CarB family. In terms of assembly, composed of two chains; the small (or glutamine) chain promotes the hydrolysis of glutamine to ammonia, which is used by the large (or ammonia) chain to synthesize carbamoyl phosphate. Tetramer of heterodimers (alpha,beta)4. Mg(2+) is required as a cofactor. Mn(2+) serves as cofactor.

The enzyme catalyses hydrogencarbonate + L-glutamine + 2 ATP + H2O = carbamoyl phosphate + L-glutamate + 2 ADP + phosphate + 2 H(+). It catalyses the reaction hydrogencarbonate + NH4(+) + 2 ATP = carbamoyl phosphate + 2 ADP + phosphate + 2 H(+). Its pathway is amino-acid biosynthesis; L-arginine biosynthesis; carbamoyl phosphate from bicarbonate: step 1/1. The protein operates within pyrimidine metabolism; UMP biosynthesis via de novo pathway; (S)-dihydroorotate from bicarbonate: step 1/3. Large subunit of the glutamine-dependent carbamoyl phosphate synthetase (CPSase). CPSase catalyzes the formation of carbamoyl phosphate from the ammonia moiety of glutamine, carbonate, and phosphate donated by ATP, constituting the first step of 2 biosynthetic pathways, one leading to arginine and/or urea and the other to pyrimidine nucleotides. The large subunit (synthetase) binds the substrates ammonia (free or transferred from glutamine from the small subunit), hydrogencarbonate and ATP and carries out an ATP-coupled ligase reaction, activating hydrogencarbonate by forming carboxy phosphate which reacts with ammonia to form carbamoyl phosphate. The chain is Carbamoyl phosphate synthase large chain from Staphylococcus aureus (strain MW2).